Here is a 141-residue protein sequence, read N- to C-terminus: Large ribosomal subunit protein uL11 (141 aa).

This sequence belongs to the universal ribosomal protein uL11 family. As to quaternary structure, part of the ribosomal stalk of the 50S ribosomal subunit. Interacts with L10 and the large rRNA to form the base of the stalk. L10 forms an elongated spine to which L12 dimers bind in a sequential fashion forming a multimeric L10(L12)X complex. In terms of processing, one or more lysine residues are methylated.

Its function is as follows. Forms part of the ribosomal stalk which helps the ribosome interact with GTP-bound translation factors. The protein is Large ribosomal subunit protein uL11 of Microcystis aeruginosa (strain NIES-843 / IAM M-2473).